The chain runs to 411 residues: Solute carrier RCH1 (411 aa).

Over 1-17 (MSLETFRESKAYKWTSK) the chain is Cytoplasmic. The chain crosses the membrane as a helical span at residues 18 to 38 (VISFLIGQWFFIFLGVFIALA). Over 39–52 (HSYPEFAKQGGTIR) the chain is Extracellular. The chain crosses the membrane as a helical span at residues 53-73 (AEYSIGYGAVAVIFLISGLSM). Residues 74-89 (STKQLLVNVANWRAHF) are Cytoplasmic-facing. Residues 90–110 (TVLSMSFLVTSAIIYGIASGI) traverse the membrane as a helical segment. Topologically, residues 111-120 (KASHNGQIDD) are extracellular. Residues 121-141 (WLLIGLIVTHACPTTVSSNVV) traverse the membrane as a helical segment. The Cytoplasmic segment spans residues 142 to 150 (MTKQAHGND). Residues 151–171 (ILTLCEVFIGNVLGAFITPAL) traverse the membrane as a helical segment. The Extracellular portion of the chain corresponds to 172-204 (LQMYMRGTWEIGNPSHQTQGDSTVQELYAHTMK). Residues 205–225 (QLGLSVFVPLFVGQVVQNIFP) traverse the membrane as a helical segment. Topologically, residues 226–242 (KQTKWCLTTFKLNKVGS) are cytoplasmic. The helical transmembrane segment at 243-263 (FMLLLIMFQSFSTAFAQHAFT) threads the bilayer. The Extracellular segment spans residues 264-269 (SVSHAS). A helical membrane pass occupies residues 270 to 290 (IIFLVFFNIGIYLFFTVLTFF). Over 291–329 (YSRPFWILRVFKEEPNESSSKLYRYSYAFFRPFYYNRKD) the chain is Cytoplasmic. The chain crosses the membrane as a helical span at residues 330–350 (TVAVMLCGPAKTAALGVSLVS). The Extracellular portion of the chain corresponds to 351-361 (SQYGSHNPKLG). A helical transmembrane segment spans residues 362-382 (IILVPLVLYQAEQVMTANVLV). Residues 383 to 411 (SFMRKWIHAEDKVPEDEETSVGSDNDPKK) are Cytoplasmic-facing.

It belongs to the bile acid:sodium symporter (BASS) (TC 2.A.28) family.

The protein resides in the cell membrane. Its subcellular location is the bud neck. Solute carrier protein that negatively regulates the cytosolic homeostasis in response to high levels of extracellular calcium. The chain is Solute carrier RCH1 from Candida albicans (strain SC5314 / ATCC MYA-2876) (Yeast).